Here is a 174-residue protein sequence, read N- to C-terminus: Crossover junction endodeoxyribonuclease RuvC (174 aa).

Catalysis depends on residues D8, E69, and D141. Residues D8, E69, and D141 each coordinate Mg(2+).

This sequence belongs to the RuvC family. Homodimer which binds Holliday junction (HJ) DNA. The HJ becomes 2-fold symmetrical on binding to RuvC with unstacked arms; it has a different conformation from HJ DNA in complex with RuvA. In the full resolvosome a probable DNA-RuvA(4)-RuvB(12)-RuvC(2) complex forms which resolves the HJ. Requires Mg(2+) as cofactor.

The protein resides in the cytoplasm. It catalyses the reaction Endonucleolytic cleavage at a junction such as a reciprocal single-stranded crossover between two homologous DNA duplexes (Holliday junction).. Functionally, the RuvA-RuvB-RuvC complex processes Holliday junction (HJ) DNA during genetic recombination and DNA repair. Endonuclease that resolves HJ intermediates. Cleaves cruciform DNA by making single-stranded nicks across the HJ at symmetrical positions within the homologous arms, yielding a 5'-phosphate and a 3'-hydroxyl group; requires a central core of homology in the junction. The consensus cleavage sequence is 5'-(A/T)TT(C/G)-3'. Cleavage occurs on the 3'-side of the TT dinucleotide at the point of strand exchange. HJ branch migration catalyzed by RuvA-RuvB allows RuvC to scan DNA until it finds its consensus sequence, where it cleaves and resolves the cruciform DNA. The protein is Crossover junction endodeoxyribonuclease RuvC of Xanthomonas euvesicatoria pv. vesicatoria (strain 85-10) (Xanthomonas campestris pv. vesicatoria).